Reading from the N-terminus, the 505-residue chain is MAVAVVTSRRMINIGNSIRRCFILNHRFFSTELTPTTITPINQDHLLRVCTILYQQQNSPDSRLVSKLSSTKFQLTHEFFLQVCNNFPLSWRPVHRFFLYSQTHHPDFTHTSTTSNKMLAIIGNSRNMDLFWELAQEIGKRGLVNDKTFRIVLKTLASARELKKCVNYFHLMNGFGYLYNVETMNRGVETLCKEKLVEEAKFVFIKLKEFIKPDEITYRTMIQGFCDVGDLIEAAKLWNLMMDEGFDVDIEAGKKIMETLLKKNQFDEASKVFYVMVSKRGGDLDGGFYRVMIDWLCKNGRIDMARKVFDEMRERGVYVDNLTWASLIYGLLVKRRVVEAYGLVEGVENPDISIYHGLIKGLVKIKRASEATEVFRKMIQRGCEPIMHTYLMLLQGHLGRRGRKGPDPLVNFDTIFVGGMIKAGKRLETTKYIERTLKRGLEVPRFDYSKFLHYYSNEEGVVMFEEMAKKLREVSLFDLADIFQRYGEKMTTRERRRDRDQLLKT.

PPR repeat units lie at residues 145–179, 180–210, 214–248, 249–279, 285–319, 320–350, and 351–385; these read NDKT…GYLY, NVET…LKEF, DEIT…GFDV, DIEA…MVSK, DGGF…GVYV, DNLT…VENP, and DISI…GCEP.

It belongs to the PPR family. P subfamily.

The polypeptide is Putative pentatricopeptide repeat-containing protein At1g26500 (Arabidopsis thaliana (Mouse-ear cress)).